The sequence spans 423 residues: Testin (423 aa).

Disordered stretches follow at residues 1-21 (MSAT…ACAS) and 138-169 (EKQP…PSKC). Positions 97–204 (MILTNPVAAK…GDVKFPSEMN (108 aa)) constitute a PET domain. A compositionally biased stretch (basic and acidic residues) spans 160–169 (PAHDQDPSKC). 3 consecutive LIM zinc-binding domains span residues 236–299 (YSCY…CDSE), 301–361 (PRCA…NHAV), and 364–423 (QGCH…RMMS).

It belongs to the prickle / espinas / testin family. As to quaternary structure, interacts via LIM domain 1 with ZYX. Interacts (via LIM domain 3) with ENAH and VASP. Interacts with ALKBH4, talin, actin, alpha-actinin, GRIP1 and PXN. Interacts (via LIM domain 2) with ACTL7A (via N-terminus). Heterodimer with ACTL7A; the heterodimer interacts with ENAH to form a heterotrimer. In terms of tissue distribution, detected at the acrosome of round spermatids (at protein level). Isoform TES1 transcript is highly expressed in adult testis and detected at low levels in other tissues. Isoform TES2 transcript is highly expressed in testis, kidney and spleen; intermediate in thymus, submaxillary gland and lung; detected at low levels in other tissues.

It is found in the cytoplasm. The protein localises to the cell junction. It localises to the focal adhesion. Its function is as follows. Scaffold protein that may play a role in cell adhesion, cell spreading and in the reorganization of the actin cytoskeleton. Plays a role in the regulation of cell proliferation. May act as a tumor suppressor. The polypeptide is Testin (Tes) (Mus musculus (Mouse)).